Reading from the N-terminus, the 309-residue chain is Ferredoxin--NADP reductase (309 aa).

Residues D25, Q33, Y38, V77, F107, D267, and T307 each contribute to the FAD site.

The protein belongs to the ferredoxin--NADP reductase type 2 family. Homodimer. It depends on FAD as a cofactor.

It carries out the reaction 2 reduced [2Fe-2S]-[ferredoxin] + NADP(+) + H(+) = 2 oxidized [2Fe-2S]-[ferredoxin] + NADPH. This is Ferredoxin--NADP reductase from Lactobacillus acidophilus (strain ATCC 700396 / NCK56 / N2 / NCFM).